A 481-amino-acid polypeptide reads, in one-letter code: Zinc metalloproteinase/disintegrin (481 aa).

Positions 1–20 (MIQVLLVTICLAVFPYQGSS) are cleaved as a signal peptide. Positions 21–190 (IILESGNVDD…KASQLYLTPE (170 aa)) are excised as a propeptide. A Peptidase M12B domain is found at 197 to 392 (RHIELAIVVD…KKPQCILNAP (196 aa)). The Ca(2+) site is built by Glu-200 and Asp-284. 3 disulfide bridges follow: Cys-308–Cys-387, Cys-349–Cys-371, and Cys-351–Cys-354. His-333 provides a ligand contact to Zn(2+). Residue Glu-334 is part of the active site. Residues His-337 and His-343 each coordinate Zn(2+). 2 residues coordinate Ca(2+): Cys-387 and Asn-390. Positions 393–410 (LRTDTVSTPISGNEFLEA) are excised as a propeptide. One can recognise a Disintegrin domain in the interval 400–481 (TPISGNEFLE…ADCPRNGLYG (82 aa)). 6 disulfides stabilise this stretch: Cys-414–Cys-429, Cys-416–Cys-424, Cys-423–Cys-446, Cys-437–Cys-443, Cys-442–Cys-467, and Cys-455–Cys-474. Positions 459 to 461 (RGD) match the Cell attachment site motif.

The protein belongs to the venom metalloproteinase (M12B) family. P-II subfamily. P-IIa sub-subfamily. As to quaternary structure, monomer. The cofactor is Zn(2+). As to expression, expressed by the venom gland.

The protein resides in the secreted. Its function is as follows. Impairs hemostasis in the envenomed animal. In terms of biological role, inhibits platelet aggregation induced by ADP and collagen. Acts by inhibiting fibrinogen interaction with platelet receptors GPIIb/GPIIIa (ITGA2B/ITGB3). Has antitumor-growth activity. The sequence is that of Zinc metalloproteinase/disintegrin from Protobothrops jerdonii (Jerdon's pitviper).